The following is a 174-amino-acid chain: Crossover junction endodeoxyribonuclease RuvC (174 aa).

Residues Asp-8, Glu-67, and Asp-139 contribute to the active site. Residues Asp-8, Glu-67, and Asp-139 each contribute to the Mg(2+) site.

This sequence belongs to the RuvC family. In terms of assembly, homodimer which binds Holliday junction (HJ) DNA. The HJ becomes 2-fold symmetrical on binding to RuvC with unstacked arms; it has a different conformation from HJ DNA in complex with RuvA. In the full resolvosome a probable DNA-RuvA(4)-RuvB(12)-RuvC(2) complex forms which resolves the HJ. Mg(2+) is required as a cofactor.

The protein resides in the cytoplasm. The enzyme catalyses Endonucleolytic cleavage at a junction such as a reciprocal single-stranded crossover between two homologous DNA duplexes (Holliday junction).. Its function is as follows. The RuvA-RuvB-RuvC complex processes Holliday junction (HJ) DNA during genetic recombination and DNA repair. Endonuclease that resolves HJ intermediates. Cleaves cruciform DNA by making single-stranded nicks across the HJ at symmetrical positions within the homologous arms, yielding a 5'-phosphate and a 3'-hydroxyl group; requires a central core of homology in the junction. The consensus cleavage sequence is 5'-(A/T)TT(C/G)-3'. Cleavage occurs on the 3'-side of the TT dinucleotide at the point of strand exchange. HJ branch migration catalyzed by RuvA-RuvB allows RuvC to scan DNA until it finds its consensus sequence, where it cleaves and resolves the cruciform DNA. The polypeptide is Crossover junction endodeoxyribonuclease RuvC (Pseudomonas fluorescens (strain ATCC BAA-477 / NRRL B-23932 / Pf-5)).